We begin with the raw amino-acid sequence, 218 residues long: Octanoyltransferase (218 aa).

The BPL/LPL catalytic domain occupies 31-206 (EETPDEVWLV…ELVNLLGYEQ (176 aa)). Substrate-binding positions include 70-77 (RGGQVTYH), 137-139 (SLG), and 150-152 (GLA). C168 serves as the catalytic Acyl-thioester intermediate.

The protein belongs to the LipB family.

It is found in the cytoplasm. The catalysed reaction is octanoyl-[ACP] + L-lysyl-[protein] = N(6)-octanoyl-L-lysyl-[protein] + holo-[ACP] + H(+). Its pathway is protein modification; protein lipoylation via endogenous pathway; protein N(6)-(lipoyl)lysine from octanoyl-[acyl-carrier-protein]: step 1/2. Functionally, catalyzes the transfer of endogenously produced octanoic acid from octanoyl-acyl-carrier-protein onto the lipoyl domains of lipoate-dependent enzymes. Lipoyl-ACP can also act as a substrate although octanoyl-ACP is likely to be the physiological substrate. This is Octanoyltransferase from Vibrio vulnificus (strain CMCP6).